The sequence spans 191 residues: Lipid A 1-phosphatase (191 aa).

Transmembrane regions (helical) follow at residues 22-42 (LLAL…PKVP), 60-80 (FIPT…VGLF), 117-137 (GNFN…AFLM), 145-162 (YLWL…RIYL), and 164-184 (MHTI…VGLF).

The protein belongs to the lipid A LpxE 1-phosphatase family.

The protein resides in the cell inner membrane. It participates in bacterial outer membrane biogenesis; LPS lipid A biosynthesis. Removes the 1-phosphate group from tetra- and probably hexaacylated lipid A species. Absence of the 1-phosphate group renders the bacteria partially resistant to host-derived cationic antimicrobial peptides (CAMP), allowing it to camouflage itself from the host innate immune response, and plays a role in the long-term colonization of the host's stomach. In Helicobacter pylori (strain J99 / ATCC 700824) (Campylobacter pylori J99), this protein is Lipid A 1-phosphatase.